Here is a 423-residue protein sequence, read N- to C-terminus: MDAENGEGQVQVHLKTKQEHYAVPDVPYAIDGTMTTVELNTFLNALLRNKSGDESAIDFDFLVFDEYLRGRLCDHLKEKAISFEDAIEIEYVERFPAPQPQDCLLHDDWVSAVKVSGKWILTGCYDNTLNIWTHKGKHILTIPGHTAPIKAVDWISLDNDIGRFVSSSQDQTVMLWQWNVDSNAVECVSICKGHERGVDSISVSPDATRFATGSWDTMLKVWSAAEDDAGGDAASSKRPKENGVRTPIMTLQGHRESISAVQWIDTSTLLTTSWDHTMKIWDLSLEGIKTEISTNKSIFDASYSNLNRLIVTASADKNLRLYDPRTNQGSIVRNTYLGHNAWVQTVMWSTTEEFLFVSGAYDNQNKLWDCRSPKAPLYDLLGHGEKVLDIDWSNPKYICSGGADNTVRVFKSRKAGVETMDDK.

The interval 10-93 (VQVHLKTKQE…EDAIEIEYVE (84 aa)) is ubiquitin-like (UBL) domain. WD repeat units follow at residues 105-142 (LHDD…ILTI), 144-186 (GHTA…NAVE), 193-232 (GHER…AGGD), 253-291 (GHRE…IKTE), 293-332 (STNK…GSIV), 338-378 (GHNA…APLY), and 382-420 (GHGE…VETM).

Belongs to the WD repeat WDR12/YTM1 family.

The protein localises to the nucleus. Its subcellular location is the nucleolus. The protein resides in the nucleoplasm. Its function is as follows. Required for maturation of ribosomal RNAs and formation of the large ribosomal subunit. In Drosophila willistoni (Fruit fly), this protein is Ribosome biogenesis protein WDR12 homolog.